The following is a 104-amino-acid chain: Large ribosomal subunit protein uL23 (104 aa).

Belongs to the universal ribosomal protein uL23 family. As to quaternary structure, part of the 50S ribosomal subunit. Contacts protein L29, and trigger factor when it is bound to the ribosome.

Functionally, one of the early assembly proteins it binds 23S rRNA. One of the proteins that surrounds the polypeptide exit tunnel on the outside of the ribosome. Forms the main docking site for trigger factor binding to the ribosome. The chain is Large ribosomal subunit protein uL23 from Trichormus variabilis (strain ATCC 29413 / PCC 7937) (Anabaena variabilis).